A 200-amino-acid chain; its full sequence is Imidazoleglycerol-phosphate dehydratase (200 aa).

It belongs to the imidazoleglycerol-phosphate dehydratase family.

The protein resides in the cytoplasm. The catalysed reaction is D-erythro-1-(imidazol-4-yl)glycerol 3-phosphate = 3-(imidazol-4-yl)-2-oxopropyl phosphate + H2O. It functions in the pathway amino-acid biosynthesis; L-histidine biosynthesis; L-histidine from 5-phospho-alpha-D-ribose 1-diphosphate: step 6/9. This chain is Imidazoleglycerol-phosphate dehydratase, found in Chlorobium luteolum (strain DSM 273 / BCRC 81028 / 2530) (Pelodictyon luteolum).